Here is a 176-residue protein sequence, read N- to C-terminus: ADP-ribosylation factor-like protein 11 (176 aa).

A lipid anchor (N-myristoyl glycine) is attached at Gly-2. GTP is bound by residues Gly-19–Thr-26, Asp-63–Gln-67, and Asn-122–Glu-125.

Belongs to the small GTPase superfamily. Arf family.

May play a role in apoptosis. May act as a tumor suppressor. In Mus musculus (Mouse), this protein is ADP-ribosylation factor-like protein 11 (Arl11).